A 146-amino-acid chain; its full sequence is Large ribosomal subunit protein bL9 (146 aa).

This sequence belongs to the bacterial ribosomal protein bL9 family. Part of the 50S ribosomal subunit. Contacts protein L31.

In terms of biological role, binds to the 23S rRNA and protein L31. The protein is Large ribosomal subunit protein bL9 (rplI) of Deinococcus radiodurans (strain ATCC 13939 / DSM 20539 / JCM 16871 / CCUG 27074 / LMG 4051 / NBRC 15346 / NCIMB 9279 / VKM B-1422 / R1).